A 235-amino-acid polypeptide reads, in one-letter code: Glutathione S-transferase L3 (235 aa).

One can recognise a GST N-terminal domain in the interval 27-108; sequence GTTRLYTSYV…YLDNTFEGPS (82 aa). Glutathione contacts are provided by residues 37-38, 65-66, 79-80, and 92-93; these read CP, NR, KV, and ES. One can recognise a GST C-terminal domain in the interval 86–230; it reads NGKIIGESLD…MDPKEIVEVF (145 aa).

The protein belongs to the GST superfamily. Lambda family.

It is found in the cytoplasm. The protein resides in the cytosol. It carries out the reaction RX + glutathione = an S-substituted glutathione + a halide anion + H(+). In terms of biological role, catalyzes the glutathione-dependent reduction of S-glutathionylquercetin to quercetin. This Arabidopsis thaliana (Mouse-ear cress) protein is Glutathione S-transferase L3 (GSTL3).